The primary structure comprises 722 residues: MFDTTPHSGRSSPSSSPSLRKRLQLLPPIRPPPASEPEPGTMVEKGSDSSSEKSGVSGTLSTQSLGSRNFIRNSKKMQSWYSMLCPTYKQRNEDFRKLFSKLPEAERLIVDYSCALQREILLQGRLYLSENWICFYSNIFRWETTISIQLKEVTCLKKEKTAKLIPNAIQICTESEKHFFTSFGARDRCFLLIFRLWQNALLEKTLSPRELWHLVHQCYGSELGLTSEDEDYVCPLQLNGLGSPKEVGDVIALSDISPSGAADHSQEPSPVGSRRGRVTPNLSRASSDADHGAEEDKEEQTDGLDASSSQTVTPVAEPLSSEPTPPDGPTSSLGPLDLLSREELLTDTSNSSSSTGEEGDLAALLPDLSGRLLINSVFHMGAERLQQMLFSDSPFLQGFLQQRKFTDVTLSPWSSDSKCHQRRVLTYTIPISNQLGPKSASVVETQTLFRRGPQAGGCVVDSEVLTQGIPYQDYFYTAHRYCILGLARNKARLRVSSEIRYRKQPWSLVKSLIEKNSWSGIEDYFHHLDRELAKAEKLSLEEGGKDTRGLLSGLRRRKRPLSWRGHRDGPQHPDPDPCTQTSMHTSGSLSSRFSEPSVDQGPGAGIPSALVLISIVLIVLIALNALLFYRLWSLERTAHTFESWHSLALAKGKFPQTATEWAEILALQKHFHSVEVHKWRQILRASVELLDEMKFSLEKLHQGITVPDPPLDTQPQPDDSFP.

A disordered region spans residues 1-62 (MFDTTPHSGR…KSGVSGTLST (62 aa)). The span at 8–18 (SGRSSPSSSPS) shows a compositional bias: low complexity. The GRAM domain occupies 93 to 160 (EDFRKLFSKL…KEVTCLKKEK (68 aa)). The interval 256-336 (ISPSGAADHS…DGPTSSLGPL (81 aa)) is disordered. Residues S265, S269, S273, and S417 each carry the phosphoserine modification. Positions 369–540 (SGRLLINSVF…ELAKAEKLSL (172 aa)) constitute a VASt domain. The tract at residues 561–600 (LSWRGHRDGPQHPDPDPCTQTSMHTSGSLSSRFSEPSVDQ) is disordered. Residues 565–575 (GHRDGPQHPDP) show a composition bias toward basic and acidic residues. The span at 578–594 (CTQTSMHTSGSLSSRFS) shows a compositional bias: polar residues. The helical transmembrane segment at 609–629 (ALVLISIVLIVLIALNALLFY) threads the bilayer.

Highly expressed in the brain.

The protein resides in the endoplasmic reticulum membrane. The protein localises to the cell membrane. It is found in the cytoplasmic vesicle. It localises to the autophagosome. In terms of biological role, cholesterol transporter that mediates non-vesicular transport of cholesterol from the plasma membrane (PM) to the endoplasmic reticulum (ER). Contains unique domains for binding cholesterol and the PM, thereby serving as a molecular bridge for the transfer of cholesterol from the PM to the ER. Plays a crucial role in cholesterol homeostasis and has the unique ability to localize to the PM based on the level of membrane cholesterol. In lipid-poor conditions localizes to the ER membrane and in response to excess cholesterol in the PM is recruited to the endoplasmic reticulum-plasma membrane contact sites (EPCS) which is mediated by the GRAM domain. At the EPCS, the sterol-binding VASt/ASTER domain binds to the cholesterol in the PM and facilitates its transfer from the PM to ER. May play a role in tumor progression. Plays a role in autophagy regulation and is required for biogenesis of the autophagosome. This function in autophagy requires its cholesterol-transfer activity. The chain is Protein Aster-A from Mus musculus (Mouse).